The chain runs to 119 residues: Small ribosomal subunit protein uS13 (119 aa).

Positions 93 to 119 are disordered; that stretch reads RRGLPLRGQRTRSNARTRKGKRKPIRS.

It belongs to the universal ribosomal protein uS13 family. Part of the 30S ribosomal subunit. Forms a loose heterodimer with protein S19. Forms two bridges to the 50S subunit in the 70S ribosome.

In terms of biological role, located at the top of the head of the 30S subunit, it contacts several helices of the 16S rRNA. In the 70S ribosome it contacts the 23S rRNA (bridge B1a) and protein L5 of the 50S subunit (bridge B1b), connecting the 2 subunits; these bridges are implicated in subunit movement. Contacts the tRNAs in the A and P-sites. The sequence is that of Small ribosomal subunit protein uS13 from Coxiella burnetii (strain RSA 493 / Nine Mile phase I).